Consider the following 204-residue polypeptide: Methyl-CpG-binding domain-containing protein 1 (204 aa).

The interval methionine 1–glycine 46 is disordered. Positions glutamate 15–serine 24 are enriched in polar residues. Over residues lysine 25–alanine 34 the composition is skewed to basic and acidic residues. The segment at glycine 49–tyrosine 104 adopts a CW-type zinc-finger fold. The MBD-associated domain (MAD) motif lies at glutamine 58–cysteine 96. Residues cysteine 59, cysteine 62, cysteine 88, and cysteine 96 each contribute to the Zn(2+) site. An MBD domain is found at tryptophan 110–valine 180.

Mostly expressed in flowers and buds.

The protein localises to the nucleus. Probable transcriptional regulator. The polypeptide is Methyl-CpG-binding domain-containing protein 1 (MBD1) (Arabidopsis thaliana (Mouse-ear cress)).